A 255-amino-acid chain; its full sequence is Protein NEN4 (255 aa).

The 164-residue stretch at 11-174 folds into the Exonuclease domain; that stretch reads VFFDLETNVP…DDVRMNLEVL (164 aa). Residues D14 and E16 each contribute to the Mg(2+) site. The Proton donor/acceptor role is filled by H161. Mg(2+) is bound at residue D166.

Mg(2+) is required as a cofactor. As to expression, expressed in the sieve elements and phloem pole pericycle cells.

It localises to the nucleus. Its function is as follows. Probable exonuclease required for enuclation of sieve elements. The sequence is that of Protein NEN4 from Arabidopsis thaliana (Mouse-ear cress).